The chain runs to 427 residues: Glutamate-1-semialdehyde 2,1-aminomutase (427 aa).

N6-(pyridoxal phosphate)lysine is present on lysine 267.

It belongs to the class-III pyridoxal-phosphate-dependent aminotransferase family. HemL subfamily. Homodimer. The cofactor is pyridoxal 5'-phosphate.

Its subcellular location is the cytoplasm. The enzyme catalyses (S)-4-amino-5-oxopentanoate = 5-aminolevulinate. Its pathway is porphyrin-containing compound metabolism; protoporphyrin-IX biosynthesis; 5-aminolevulinate from L-glutamyl-tRNA(Glu): step 2/2. This is Glutamate-1-semialdehyde 2,1-aminomutase from Desulfosudis oleivorans (strain DSM 6200 / JCM 39069 / Hxd3) (Desulfococcus oleovorans).